The primary structure comprises 225 residues: MRSTYILIIVPLIIIGGGVVADNTNETPVLAHSSDEQPHQRLTYYNWDHKDLGTSAFEDLPPLQDQPTPLPIDQSDRCPDGWLRYSDSCYFIETESLGFAKAERKCHDKQATLFVANSMEEWDAVRDHAEKSVLSWIGLVRFSHYERLEQLPRWQTTGSINPSKINWLIKPFKPVVNGWSSYANCAASFQSPTEVESASYTFFYPCTMAFKSICERNSTILNARN.

Residues 1–21 (MRSTYILIIVPLIIIGGGVVA) form the signal peptide. One can recognise a C-type lectin domain in the interval 85 to 215 (YSDSCYFIET…CTMAFKSICE (131 aa)). Disulfide bonds link Cys-106–Cys-214 and Cys-185–Cys-206. An N-linked (GlcNAc...) asparagine glycan is attached at Asn-217.

Its subcellular location is the secreted. This Caenorhabditis elegans protein is C-type lectin domain-containing protein 91 (clec-91).